The sequence spans 403 residues: 26S proteasome regulatory subunit 8 (403 aa).

186 to 193 (GPPGTGKT) contacts ATP.

This sequence belongs to the AAA ATPase family.

The protein resides in the cytoplasm. The protein localises to the nucleus. Its function is as follows. The 26S proteasome is involved in the ATP-dependent degradation of ubiquitinated proteins. The regulatory (or ATPase) complex confers ATP dependency and substrate specificity to the 26S complex. The chain is 26S proteasome regulatory subunit 8 (psmC5) from Dictyostelium discoideum (Social amoeba).